The following is a 216-amino-acid chain: Cytidylate kinase (216 aa).

7-15 contributes to the ATP binding site; that stretch reads GPSGTGKST.

This sequence belongs to the cytidylate kinase family. Type 1 subfamily.

The protein resides in the cytoplasm. It catalyses the reaction CMP + ATP = CDP + ADP. The enzyme catalyses dCMP + ATP = dCDP + ADP. The protein is Cytidylate kinase of Chlamydia felis (strain Fe/C-56) (Chlamydophila felis).